The sequence spans 270 residues: Myeloid leukemia factor 1 (270 aa).

Residues Ser6, Ser8, Ser32, and Ser34 each carry the phosphoserine modification. Residues 50 to 125 (RARNRMGHED…VGDEPPKVFQ (76 aa)) are interaction with COPS3. Disordered stretches follow at residues 127–148 (STQT…RDSD) and 221–247 (RSVA…AIEH). Residues 138 to 148 (KETRKALRDSD) are compositionally biased toward basic and acidic residues.

The protein belongs to the MLF family. As to quaternary structure, interacts with CENPU. Also interacts with NRBP1/MADM, YWHAZ/14-3-3-zeta and HNRPUL2/MANP. NRBP1 recruits a serine kinase which phosphorylates both itself and MLF1. Phosphorylated MLF1 then binds to YWHAZ and is retained in the cytoplasm. Retained in the nucleus by binding to HNRPUL2. Binds to COPS3/CSN3 which is required for suppression of COP1 and activation of p53. Phosphorylation is required for binding to YWHAZ.

It localises to the cytoplasm. Its subcellular location is the nucleus. The protein resides in the cell projection. It is found in the cilium. The protein localises to the cytoskeleton. It localises to the cilium basal body. Functionally, involved in lineage commitment of primary hemopoietic progenitors by restricting erythroid formation and enhancing myeloid formation. Interferes with erythropoietin-induced erythroid terminal differentiation by preventing cells from exiting the cell cycle through suppression of CDKN1B/p27Kip1 levels. Suppresses COP1 activity via CSN3 which activates p53 and induces cell cycle arrest. Binds DNA and affects the expression of a number of genes so may function as a transcription factor in the nucleus. The chain is Myeloid leukemia factor 1 (MLF1) from Bos taurus (Bovine).